We begin with the raw amino-acid sequence, 567 residues long: Dihydroxy-acid dehydratase 2 (567 aa).

Position 56 (cysteine 56) interacts with [2Fe-2S] cluster. Aspartate 88 contacts Mg(2+). Position 129 (cysteine 129) interacts with [2Fe-2S] cluster. Residues aspartate 130 and lysine 131 each coordinate Mg(2+). An N6-carboxylysine modification is found at lysine 131. Position 206 (cysteine 206) interacts with [2Fe-2S] cluster. Glutamate 457 is a Mg(2+) binding site. The active-site Proton acceptor is serine 483.

It belongs to the IlvD/Edd family. Homodimer. [2Fe-2S] cluster is required as a cofactor. It depends on Mg(2+) as a cofactor.

It catalyses the reaction (2R)-2,3-dihydroxy-3-methylbutanoate = 3-methyl-2-oxobutanoate + H2O. The catalysed reaction is (2R,3R)-2,3-dihydroxy-3-methylpentanoate = (S)-3-methyl-2-oxopentanoate + H2O. It functions in the pathway amino-acid biosynthesis; L-isoleucine biosynthesis; L-isoleucine from 2-oxobutanoate: step 3/4. It participates in amino-acid biosynthesis; L-valine biosynthesis; L-valine from pyruvate: step 3/4. Functions in the biosynthesis of branched-chain amino acids. Catalyzes the dehydration of (2R,3R)-2,3-dihydroxy-3-methylpentanoate (2,3-dihydroxy-3-methylvalerate) into 2-oxo-3-methylpentanoate (2-oxo-3-methylvalerate) and of (2R)-2,3-dihydroxy-3-methylbutanoate (2,3-dihydroxyisovalerate) into 2-oxo-3-methylbutanoate (2-oxoisovalerate), the penultimate precursor to L-isoleucine and L-valine, respectively. This chain is Dihydroxy-acid dehydratase 2, found in Corynebacterium efficiens (strain DSM 44549 / YS-314 / AJ 12310 / JCM 11189 / NBRC 100395).